Consider the following 381-residue polypeptide: Probable tRNA sulfurtransferase (381 aa).

One can recognise a THUMP domain in the interval 55–163; the sequence is GECLENLNKV…DDEAFIYHEK (109 aa). ATP contacts are provided by residues 181-182, lysine 265, glycine 287, and glutamine 296; that span reads LV.

It belongs to the ThiI family.

Its subcellular location is the cytoplasm. The enzyme catalyses [ThiI sulfur-carrier protein]-S-sulfanyl-L-cysteine + a uridine in tRNA + 2 reduced [2Fe-2S]-[ferredoxin] + ATP + H(+) = [ThiI sulfur-carrier protein]-L-cysteine + a 4-thiouridine in tRNA + 2 oxidized [2Fe-2S]-[ferredoxin] + AMP + diphosphate. It catalyses the reaction [ThiS sulfur-carrier protein]-C-terminal Gly-Gly-AMP + S-sulfanyl-L-cysteinyl-[cysteine desulfurase] + AH2 = [ThiS sulfur-carrier protein]-C-terminal-Gly-aminoethanethioate + L-cysteinyl-[cysteine desulfurase] + A + AMP + 2 H(+). Its pathway is cofactor biosynthesis; thiamine diphosphate biosynthesis. Catalyzes the ATP-dependent transfer of a sulfur to tRNA to produce 4-thiouridine in position 8 of tRNAs, which functions as a near-UV photosensor. Also catalyzes the transfer of sulfur to the sulfur carrier protein ThiS, forming ThiS-thiocarboxylate. This is a step in the synthesis of thiazole, in the thiamine biosynthesis pathway. The sulfur is donated as persulfide by IscS. This is Probable tRNA sulfurtransferase from Methanobrevibacter smithii (strain ATCC 35061 / DSM 861 / OCM 144 / PS).